The chain runs to 500 residues: Beta-xylosidase (500 aa).

The active-site Proton donor is E160. The active-site Nucleophile is E277.

The protein belongs to the glycosyl hydrolase 39 family.

The enzyme catalyses Hydrolysis of (1-&gt;4)-beta-D-xylans, to remove successive D-xylose residues from the non-reducing termini.. The sequence is that of Beta-xylosidase (xynB) from Thermoanaerobacterium saccharolyticum (strain DSM 8691 / JW/SL-YS485).